The primary structure comprises 827 residues: MKLLGNSKYIFVVLLLCISVFLNGQETLDEIKYSEEVCTEQIDIHILLDGSGSIGYSNWKAHVIPMLNTLVDNLNISNDEINVSLTLFSTNSRELIKLKGYGSTSKDSLRFILAHLQNNYSPNGNTNLTSALLVVDTLINERMYRPDAIQLAIILTDGIPNDLPRSTAVVHQLKRKHVNVAIIGVGAGVNNEYNRILVGCDRYAPCPYYSSGSWNEAQNMIKPFLTKVCQEVERIAHCGKWEEWSECSTTCDEGRKIRRRQILHPGCVSEMTTPCKVRDCPQIPIPPVIPNKIPEKPSNPEEPVNPNDPNDPNNPNNPNNPNNPNNPNNPNNPNNPNNPNNPNNPNNPNNPNNPNNPNNPNNPNNPNNPNNPNNPNNPNNPNDPSNPNNPNPKKRNPKRRNPNKPKPNKPNPNKPNPNEPSNPNKPNPNEPSNPNKPNPNEPSNPNKPNPNEPSNPNKPNPNEPLNPNEPSNPNEPSNPNAPSNPNEPSNPNEPSNPNEPSNPNEPSNPNEPSNPKKPSNPNEPSNPNEPLNPNEPSNPNEPSNPNEPSNPEEPSNPKEPSNPNEPSNPEEPNPEEPSNPKEPSNPEEPINPEELNPKEPSNPEESNPKEPINPEESNPKEPINPEDNENPLIIQDEPIEPRNDSNVIPILPIIPQKGNNIPSNLPENPSDSEVEYPRPNDNGENSNNTMKSKKNIPNEPIPSPGDNPYKGHEERIPKPHRSNDDYVYDNNVNKNNKDEPEIPNNEYEEDKNKNQSKSNNGYKIAGGIIGGLAILGCAGVGYNFIAGSSAAGLAGAEPAPFEDVIPDDDKDIVENEQFKLPEDNDWN.

A signal peptide spans 1–22 (MKLLGNSKYIFVVLLLCISVFL). Positions 43 to 228 (DIHILLDGSG…NMIKPFLTKV (186 aa)) constitute a VWFA domain. The TSP type-1 domain occupies 235 to 281 (IAHCGKWEEWSECSTTCDEGRKIRRRQILHPGCVSEMTTPCKVRDCP). Disulfide bonds link Cys-238/Cys-267, Cys-247/Cys-275, and Cys-251/Cys-280. Positions 278 to 761 (RDCPQIPIPP…NKNQSKSNNG (484 aa)) are disordered. A compositionally biased stretch (low complexity) spans 301 to 388 (EEPVNPNDPN…NNPNDPSNPN (88 aa)). The segment at 306 to 392 (PNDPNDPNNP…DPSNPNNPNP (87 aa)) is 29 X 3 AA tandem repeats. Residues 392–407 (PKKRNPKRRNPNKPKP) are compositionally biased toward basic residues. The segment at 402 to 514 (PNKPKPNKPN…EPSNPNEPSN (113 aa)) is 20 tandem tetra-/hexapeptide repeats. Pro residues predominate over residues 408 to 464 (NKPNPNKPNPNEPSNPNKPNPNEPSNPNKPNPNEPSNPNKPNPNEPSNPNKPNPNEP). Over residues 465–567 (LNPNEPSNPN…KEPSNPNEPS (103 aa)) the composition is skewed to low complexity. 2 consecutive repeat copies span residues 603–613 (PEESNPKEPIN) and 614–624 (PEESNPKEPIN). Residues 603-624 (PEESNPKEPINPEESNPKEPIN) form a 2 X 11 AA tandem repeats region. Polar residues predominate over residues 657 to 671 (KGNNIPSNLPENPSD). Over residues 709 to 724 (YKGHEERIPKPHRSND) the composition is skewed to basic and acidic residues. The helical transmembrane segment at 764-787 (IAGGIIGGLAILGCAGVGYNFIAG) threads the bilayer.

It localises to the cell membrane. The protein is Sporozoite surface protein 2 (SSP2) of Plasmodium yoelii yoelii.